A 378-amino-acid polypeptide reads, in one-letter code: Succinyl-diaminopimelate desuccinylase (378 aa).

His-68 contacts Zn(2+). Asp-70 is a catalytic residue. Asp-101 serves as a coordination point for Zn(2+). Glu-135 serves as the catalytic Proton acceptor. Positions 136, 164, and 350 each coordinate Zn(2+).

Belongs to the peptidase M20A family. DapE subfamily. As to quaternary structure, homodimer. Zn(2+) is required as a cofactor. The cofactor is Co(2+).

The enzyme catalyses N-succinyl-(2S,6S)-2,6-diaminopimelate + H2O = (2S,6S)-2,6-diaminopimelate + succinate. It functions in the pathway amino-acid biosynthesis; L-lysine biosynthesis via DAP pathway; LL-2,6-diaminopimelate from (S)-tetrahydrodipicolinate (succinylase route): step 3/3. In terms of biological role, catalyzes the hydrolysis of N-succinyl-L,L-diaminopimelic acid (SDAP), forming succinate and LL-2,6-diaminopimelate (DAP), an intermediate involved in the bacterial biosynthesis of lysine and meso-diaminopimelic acid, an essential component of bacterial cell walls. This chain is Succinyl-diaminopimelate desuccinylase, found in Acinetobacter baumannii (strain ATCC 17978 / DSM 105126 / CIP 53.77 / LMG 1025 / NCDC KC755 / 5377).